Here is a 179-residue protein sequence, read N- to C-terminus: Large ribosomal subunit protein uL6 (179 aa).

The protein belongs to the universal ribosomal protein uL6 family. As to quaternary structure, part of the 50S ribosomal subunit.

In terms of biological role, this protein binds to the 23S rRNA, and is important in its secondary structure. It is located near the subunit interface in the base of the L7/L12 stalk, and near the tRNA binding site of the peptidyltransferase center. The sequence is that of Large ribosomal subunit protein uL6 from Mycobacteroides abscessus (strain ATCC 19977 / DSM 44196 / CCUG 20993 / CIP 104536 / JCM 13569 / NCTC 13031 / TMC 1543 / L948) (Mycobacterium abscessus).